A 389-amino-acid polypeptide reads, in one-letter code: uncharacterized protein (389 aa).

The N-terminal stretch at 1–23 (MHFAKLGAIGLLGSIICAYAASA) is a signal peptide.

This sequence belongs to the IUNH family.

Its subcellular location is the endoplasmic reticulum lumen. This is an uncharacterized protein from Schizosaccharomyces pombe (strain 972 / ATCC 24843) (Fission yeast).